We begin with the raw amino-acid sequence, 5430 residues long: Microtubule-actin cross-linking factor 1 (5430 aa).

The tract at residues M1–L47 is disordered. An actin-binding region spans residues M1–D295. S4 is subject to Phosphoserine. Over residues L9–R30 the composition is skewed to basic and acidic residues. Phosphoserine occurs at positions 35 and 57. Calponin-homology (CH) domains lie at R78–Q181 and M194–P298. LRR repeat units lie at residues Q148–G171 and L240–R264. A Phosphoserine modification is found at S280. LRR repeat units lie at residues L377 to N399 and L441 to G464. The region spanning K868–P925 is the SH3 domain. The LRR 5 repeat unit spans residues I1050–S1073. S1122 carries the post-translational modification Phosphoserine. LRR repeat units lie at residues A1128–N1154, P1187–K1210, and H1257–A1282. Residues S1367 and S1376 each carry the phosphoserine modification. 2 LRR repeats span residues Q1579 to H1602 and L1629 to A1653. Spectrin repeat units follow at residues E1816–E1891 and Q1933–Q2041. Residue S1860 is modified to Phosphoserine. The stretch at K1869–E1891 is one LRR 11 repeat. 2 LRR repeats span residues L2058 to E2083 and I2194 to S2220. A Spectrin 3 repeat occupies R2399–E2507. A phosphoserine mark is found at S2429 and S2454. LRR repeat units lie at residues K2444–L2467, G2534–L2557, and K2702–R2725. 2 Spectrin repeats span residues T2733 to K2837 and K2842 to E2945. Residues S2769 and S2895 each carry the phosphoserine modification. LRR repeat units follow at residues N2984–D3009, N3105–E3127, and K3214–S3237. Spectrin repeat units lie at residues E3169–E3274, K3281–D3383, A3388–E3491, R3714–E3818, N3825–E3927, L4047–D4152, A4157–E4261, L4267–Q4370, Q4375–E4481, A4486–D4589, R4594–E4700, Q4707–Q4808, and Q4812–E4916. T3368 bears the Phosphothreonine mark. LRR repeat units follow at residues M3737–I3761 and A3846–E3870. Position 4074 is a phosphoserine (S4074). An N6-acetyllysine modification is found at K4252. The LRR 22 repeat unit spans residues R4538–V4561. Residues P4993–Q5023 form a disordered region. S5009 is modified (phosphoserine). EF-hand domains lie at H5083 to P5118 and T5119 to A5154. D5096, D5098, D5100, K5102, E5107, D5132, D5134, D5136, Y5138, and E5143 together coordinate Ca(2+). In terms of domain architecture, GAR spans T5159–R5231. The interval T5159 to R5430 is C-terminal tail. Residues P5247–R5430 form a disordered region. The segment covering S5267 to T5301 has biased composition (low complexity). T5296 carries the post-translational modification Phosphothreonine. Polar residues predominate over residues T5317–K5341. S5321 and S5334 each carry phosphoserine. A compositionally biased stretch (low complexity) spans S5352–A5366. The interval G5355–R5370 is 4 X 4 AA tandem repeats of [GS]-S-R-[AR]. A phosphoserine mark is found at S5372 and S5375. A compositionally biased stretch (polar residues) spans E5381–E5391. Over residues S5392 to R5403 the composition is skewed to low complexity.

The protein belongs to the plakin or cytolinker family. In terms of assembly, interacts with MAPRE1, CLASP1, CLASP2 and GOLGA4. Interacts with AXIN1 and LRP6. Found in a complex composed of MACF1, APC; AXIN1, CTNNB1 and GSK3B. Interacts with CAMSAP3. In terms of processing, phosphorylated on serine residues in the C-terminal tail by GSK3B. Phosphorylation inhibits microtubule-binding and this plays a critical role in bulge stem cell migration and skin wound repair. Wnt-signaling can repress phosphorylation.

The protein localises to the cytoplasm. The protein resides in the cytoskeleton. It localises to the golgi apparatus. It is found in the cell membrane. Its subcellular location is the cell projection. The protein localises to the ruffle membrane. The protein resides in the membrane. In terms of biological role, F-actin-binding protein which plays a role in cross-linking actin to other cytoskeletal proteins and also binds to microtubules. Plays an important role in ERBB2-dependent stabilization of microtubules at the cell cortex. Acts as a positive regulator of Wnt receptor signaling pathway and is involved in the translocation of AXIN1 and its associated complex (composed of APC, CTNNB1 and GSK3B) from the cytoplasm to the cell membrane. Has actin-regulated ATPase activity and is essential for controlling focal adhesions (FAs) assembly and dynamics. Interaction with CAMSAP3 at the minus ends of non-centrosomal microtubules tethers microtubules minus-ends to actin filaments, regulating focal adhesion size and cell migration. May play role in delivery of transport vesicles containing GPI-linked proteins from the trans-Golgi network through its interaction with GOLGA4. Plays a key role in wound healing and epidermal cell migration. Required for efficient upward migration of bulge cells in response to wounding and this function is primarily rooted in its ability to coordinate microtubule dynamics and polarize hair follicle stem cells. As a regulator of actin and microtubule arrangement and stabilization, it plays an essential role in neurite outgrowth, branching and spine formation during brain development. The sequence is that of Microtubule-actin cross-linking factor 1 from Rattus norvegicus (Rat).